The chain runs to 764 residues: Zinc finger CCCH domain-containing protein 24 (764 aa).

2 ANK repeats span residues 108–138 (EHRT…DVNR) and 143–175 (DGTT…DADA). The C3H1-type zinc finger occupies 321-348 (HYSCVPCPDFRKGVCRRGDMCEYAHGVF). Disordered stretches follow at residues 616-665 (QREK…DWGV) and 698-732 (KESP…EGPS). Positions 640–659 (SGVVGSPLSSSWSKWGSPSG) are enriched in low complexity. Polar residues predominate over residues 705-716 (QVTTAESINSVG).

This Oryza sativa subsp. japonica (Rice) protein is Zinc finger CCCH domain-containing protein 24.